Consider the following 384-residue polypeptide: Shufflon-specific DNA recombinase (384 aa).

One can recognise a Core-binding (CB) domain in the interval 9–96 (MSLSRALDKY…LLSSLFNIAR (88 aa)). Positions 118–284 (GRDRRLTSSE…RAWQLVSKLD (167 aa)) constitute a Tyr recombinase domain. Active-site residues include arginine 155, lysine 180, histidine 235, arginine 238, and histidine 262. Tyrosine 271 functions as the O-(3'-phospho-DNA)-tyrosine intermediate in the catalytic mechanism.

The protein belongs to the 'phage' integrase family.

In terms of biological role, shufflon-specific DNA recombinase. In Escherichia coli, this protein is Shufflon-specific DNA recombinase (rci).